Here is a 401-residue protein sequence, read N- to C-terminus: Nicotinate phosphoribosyltransferase (401 aa).

Residue histidine 221 is modified to Phosphohistidine; by autocatalysis.

It belongs to the NAPRTase family. Post-translationally, transiently phosphorylated on a His residue during the reaction cycle. Phosphorylation strongly increases the affinity for substrates and increases the rate of nicotinate D-ribonucleotide production. Dephosphorylation regenerates the low-affinity form of the enzyme, leading to product release.

The catalysed reaction is nicotinate + 5-phospho-alpha-D-ribose 1-diphosphate + ATP + H2O = nicotinate beta-D-ribonucleotide + ADP + phosphate + diphosphate. Its pathway is cofactor biosynthesis; NAD(+) biosynthesis; nicotinate D-ribonucleotide from nicotinate: step 1/1. Functionally, catalyzes the synthesis of beta-nicotinate D-ribonucleotide from nicotinate and 5-phospho-D-ribose 1-phosphate at the expense of ATP. The sequence is that of Nicotinate phosphoribosyltransferase from Edwardsiella ictaluri (strain 93-146).